The following is a 619-amino-acid chain: N-acetylmuramoyl-L-alanine amidase domain-containing protein SAOUHSC_02979 (619 aa).

The N-terminal stretch at 1-27 is a signal peptide; the sequence is MPKNKILIYLLSTTLVLPTLVSPTAYA. 3 disordered regions span residues 25–83, 134–226, and 238–290; these read AYAD…TIDD, SDYE…SMSD, and EDAK…NQKD. 3 stretches are compositionally biased toward basic and acidic residues: residues 30-65, 73-82, and 137-146; these read PQKDTTAKTTSHDSKKSNDDETSKDTTSKDIDKADK, NNDKKFKTID, and EQPRNGEKST. Low complexity predominate over residues 147-156; it reads NDSNKNSDNS. Positions 157-175 are enriched in basic and acidic residues; that stretch reads IKNDTDTQSSKQDKADNQK. Positions 176–192 are enriched in polar residues; the sequence is APKSNNTKPSTSNKQPN. The span at 214 to 226 shows a compositional bias: low complexity; the sequence is QKSSSKDNQSMSD. The span at 238-260 shows a compositional bias: basic and acidic residues; that stretch reads EDAKKTQKDYASQSKKDKNEKSN. Positions 327–468 are N-acetylmuramoyl-L-alanine amidase; the sequence is IAKDAHRIGQ…LNSIIKHYQL (142 aa). The Peptidase C51 domain maps to 488–617; it reads DYDDSSDEFK…AAAEELSYIT (130 aa).

It in the N-terminal section; belongs to the N-acetylmuramoyl-L-alanine amidase 2 family.

The protein resides in the secreted. The polypeptide is N-acetylmuramoyl-L-alanine amidase domain-containing protein SAOUHSC_02979 (Staphylococcus aureus (strain NCTC 8325 / PS 47)).